The following is a 400-amino-acid chain: Probable aspartate/prephenate aminotransferase (400 aa).

Positions 39, 125, and 175 each coordinate L-aspartate. Lys-239 is subject to N6-(pyridoxal phosphate)lysine. Residue Arg-375 participates in L-aspartate binding.

Belongs to the class-I pyridoxal-phosphate-dependent aminotransferase family. Homodimer. Requires pyridoxal 5'-phosphate as cofactor.

It localises to the cytoplasm. The catalysed reaction is L-aspartate + 2-oxoglutarate = oxaloacetate + L-glutamate. The enzyme catalyses L-arogenate + 2-oxoglutarate = prephenate + L-glutamate. Functionally, catalyzes the reversible conversion of aspartate and 2-oxoglutarate to glutamate and oxaloacetate. Can also transaminate prephenate in the presence of glutamate. The sequence is that of Probable aspartate/prephenate aminotransferase (aspC) from Rhizobium leguminosarum bv. phaseoli.